Here is a 151-residue protein sequence, read N- to C-terminus: MVVRRRKKSRHLRGRTRTMGWGRIGQHRGSGSRGGFGAAGMHKHMWTWVVKYAPTWFGKHGFNRPQIYELKASEINVGELAEKLDAWLREGVAKQEEGKIVVNLAELGYAKLLGRGKITRPVKVIVPAATERAVKKIEEAGGEVVILKQQG.

It belongs to the universal ribosomal protein uL15 family. As to quaternary structure, part of the 50S ribosomal subunit.

In terms of biological role, binds to the 23S rRNA. In Hyperthermus butylicus (strain DSM 5456 / JCM 9403 / PLM1-5), this protein is Large ribosomal subunit protein uL15.